A 478-amino-acid polypeptide reads, in one-letter code: PRAME family member 27 (478 aa).

The stretch at 17 to 40 is one LRR 1 repeat; the sequence is RSLLRDQALAMSTLEELPTELFPP. Residues 99 to 126 form an LRR 1; degenerate repeat; that stretch reads RWKLQVLDLQDVCENFWMVWSEAMARGS. One copy of the LRR 2; degenerate repeat lies at 181–205; the sequence is HLCCKKLKILGMPFRNIRSILKMVN. An LRR 3; degenerate repeat occupies 206–232; sequence LDCIQEVEVNCKWVLPILTQFTPYLGH. The stretch at 233-268 is one LRR 4; degenerate repeat; it reads MRNLQKLVLSHMDVSRYVSPEQKKEIVTQFTTQFLK. LRR repeat units follow at residues 269 to 294, 295 to 326, 327 to 348, 351 to 378, and 379 to 403; these read LHCL…LSCL, KTSL…SQLK, TLDL…ILLE, AATL…ALSR, and CFEL…LLSH.

The protein belongs to the PRAME family.

The polypeptide is PRAME family member 27 (Homo sapiens (Human)).